The sequence spans 205 residues: Pectinesterase inhibitor 3 (205 aa).

The N-terminal stretch at 1-25 (MAPTQNLFLVAIAFAVIFTASTVHG) is a signal peptide. Cystine bridges form between cysteine 38–cysteine 47 and cysteine 104–cysteine 156.

Belongs to the PMEI family. In terms of tissue distribution, expressed in apical meristem.

The protein resides in the secreted. It is found in the extracellular space. It localises to the apoplast. Functionally, pectin methylesterase (PME) inhibitor that can target PMEs (e.g. PME2 and PME3) in a pH-dependent manner, mainly in slightly acidic conditions (pH 6.3 and 5.0) but not at pH 7.5; this processus relies on changes in the protonation of amino acids involved in intermolecular and intramolecular interactions. Regulates de-methylesterification of pectins in the apical meristem and affects primordia formation and phyllotactic patterning. This is Pectinesterase inhibitor 3 from Arabidopsis thaliana (Mouse-ear cress).